A 330-amino-acid polypeptide reads, in one-letter code: GTPase Obg (330 aa).

Residues 1-159 (MHFIDEVKIY…MWIHLSLKLL (159 aa)) enclose the Obg domain. Positions 160 to 327 (SDVGLVGFPN…IVKLALETIK (168 aa)) constitute an OBG-type G domain. Residues 166–173 (GFPNAGKS), 191–195 (FTTLV), 212–215 (DIPG), 279–282 (NKCD), and 308–310 (STY) each bind GTP. Mg(2+) is bound by residues Ser173 and Thr193.

Belongs to the TRAFAC class OBG-HflX-like GTPase superfamily. OBG GTPase family. As to quaternary structure, monomer. Mg(2+) serves as cofactor.

Its subcellular location is the cytoplasm. An essential GTPase which binds GTP, GDP and possibly (p)ppGpp with moderate affinity, with high nucleotide exchange rates and a fairly low GTP hydrolysis rate. Plays a role in control of the cell cycle, stress response, ribosome biogenesis and in those bacteria that undergo differentiation, in morphogenesis control. In Rickettsia massiliae (strain Mtu5), this protein is GTPase Obg.